The primary structure comprises 119 residues: Large ribosomal subunit protein bL20 (119 aa).

Belongs to the bacterial ribosomal protein bL20 family.

In terms of biological role, binds directly to 23S ribosomal RNA and is necessary for the in vitro assembly process of the 50S ribosomal subunit. It is not involved in the protein synthesizing functions of that subunit. The protein is Large ribosomal subunit protein bL20 of Streptococcus pneumoniae serotype 2 (strain D39 / NCTC 7466).